Consider the following 1247-residue polypeptide: Nitric oxide synthase (1247 aa).

The segment at 13 to 33 (EVAEGRESSKANHIGEERRGY) is disordered. S146 contributes to the (6R)-L-erythro-5,6,7,8-tetrahydrobiopterin binding site. C224 is a heme b binding site. Q287, W396, Y397, E401, and N406 together coordinate L-arginine. The (6R)-L-erythro-5,6,7,8-tetrahydrobiopterin site is built by W487 and F500. Y515 serves as a coordination point for heme b. Positions 537 to 557 (PRRKFNFKQIARAVKFTSKLF) are calmodulin-binding. Residues 567-766 (ATVLYATETG…AFRKWAPEVF (200 aa)) form the Flavodoxin-like domain. Residue 712 to 743 (VFALGSSAYPNFCAFGKYIDNILGELGGERLM) participates in FMN binding. Residues 795–1065 (NTVRYAPVAE…VRSAPSFHMS (271 aa)) form the FAD-binding FR-type domain. FAD contacts are provided by residues 855–866 (YEPGDHVGIFPA) and 998–1008 (LQPRFYSISSS). Residues 1073-1091 (ILIG…WQEW) and 1170-1185 (KGHI…AEHV) contribute to the NADP(+) site.

The protein belongs to the NOS family. Requires heme b as cofactor. FAD serves as cofactor. The cofactor is FMN.

The enzyme catalyses 2 L-arginine + 3 NADPH + 4 O2 + H(+) = 2 L-citrulline + 2 nitric oxide + 3 NADP(+) + 4 H2O. Its activity is regulated as follows. Stimulated by calcium/calmodulin. Functionally, produces nitric oxide (NO) which is a messenger molecule with diverse functions throughout the body. Nitric oxide limits plasmodium development in the midgut. The sequence is that of Nitric oxide synthase from Anopheles stephensi (Indo-Pakistan malaria mosquito).